Reading from the N-terminus, the 78-residue chain is Putative gastrointestinal growth factor xP1 (78 aa).

The N-terminal stretch at 1 to 23 (MNYKVFCLVAIALIVGSIGSANG) is a signal peptide. The P-type domain maps to 30-73 (EQCSVERLARVNCGYSGITPQECTKQGCCFDSTIQDAPWCFYPR). Cystine bridges form between C32/C58, C42/C57, and C52/C69.

As to expression, stomach mucosa.

It localises to the secreted. Its function is as follows. May act as a growth factor. In Xenopus laevis (African clawed frog), this protein is Putative gastrointestinal growth factor xP1 (p1).